A 275-amino-acid chain; its full sequence is Ribosomal RNA small subunit methyltransferase A (275 aa).

The S-adenosyl-L-methionine site is built by asparagine 21, leucine 23, glycine 48, glutamate 69, aspartate 94, and asparagine 115.

The protein belongs to the class I-like SAM-binding methyltransferase superfamily. rRNA adenine N(6)-methyltransferase family. RsmA subfamily.

The protein localises to the cytoplasm. It catalyses the reaction adenosine(1518)/adenosine(1519) in 16S rRNA + 4 S-adenosyl-L-methionine = N(6)-dimethyladenosine(1518)/N(6)-dimethyladenosine(1519) in 16S rRNA + 4 S-adenosyl-L-homocysteine + 4 H(+). Its function is as follows. Specifically dimethylates two adjacent adenosines (A1518 and A1519) in the loop of a conserved hairpin near the 3'-end of 16S rRNA in the 30S particle. May play a critical role in biogenesis of 30S subunits. The protein is Ribosomal RNA small subunit methyltransferase A of Clostridium botulinum (strain ATCC 19397 / Type A).